We begin with the raw amino-acid sequence, 170 residues long: Adenine phosphoribosyltransferase (170 aa).

The protein belongs to the purine/pyrimidine phosphoribosyltransferase family. In terms of assembly, homodimer.

It localises to the cytoplasm. The catalysed reaction is AMP + diphosphate = 5-phospho-alpha-D-ribose 1-diphosphate + adenine. The protein operates within purine metabolism; AMP biosynthesis via salvage pathway; AMP from adenine: step 1/1. In terms of biological role, catalyzes a salvage reaction resulting in the formation of AMP, that is energically less costly than de novo synthesis. This Cenarchaeum symbiosum (strain A) protein is Adenine phosphoribosyltransferase.